The primary structure comprises 312 residues: Ribosomal RNA small subunit methyltransferase H (312 aa).

S-adenosyl-L-methionine contacts are provided by residues 35-37 (GGH), Asp54, Phe81, Asp100, and Gln107.

The protein belongs to the methyltransferase superfamily. RsmH family.

It is found in the cytoplasm. It carries out the reaction cytidine(1402) in 16S rRNA + S-adenosyl-L-methionine = N(4)-methylcytidine(1402) in 16S rRNA + S-adenosyl-L-homocysteine + H(+). Its function is as follows. Specifically methylates the N4 position of cytidine in position 1402 (C1402) of 16S rRNA. The chain is Ribosomal RNA small subunit methyltransferase H from Campylobacter jejuni subsp. jejuni serotype O:2 (strain ATCC 700819 / NCTC 11168).